The sequence spans 539 residues: Chaperonin GroEL (539 aa).

ATP contacts are provided by residues 29-32 (TIGP), 86-90 (DGTTT), glycine 413, 476-478 (NAA), and aspartate 492.

Belongs to the chaperonin (HSP60) family. Forms a cylinder of 14 subunits composed of two heptameric rings stacked back-to-back. Interacts with the co-chaperonin GroES.

The protein localises to the cytoplasm. The catalysed reaction is ATP + H2O + a folded polypeptide = ADP + phosphate + an unfolded polypeptide.. Its function is as follows. Together with its co-chaperonin GroES, plays an essential role in assisting protein folding. The GroEL-GroES system forms a nano-cage that allows encapsulation of the non-native substrate proteins and provides a physical environment optimized to promote and accelerate protein folding. The chain is Chaperonin GroEL from Staphylococcus epidermidis (strain ATCC 12228 / FDA PCI 1200).